The sequence spans 220 residues: MRLILLGAPGAGKGTQANFIKEKFGIPQISTGDMLRAAVKAGTPLGVEAKGYMDAGKLVPDALIIGLVKERLKESDCANGYLFDGFPRTIAQADAMKEAGVAIDYVLEIDVPFSEIIERMSGRRTHPASGRTYHVKFNPPKVEGHDDVTGEPLIQRDDDKEETVKKRLEVYEAQTKPLITYYGDWAQRGEENGLKAPQYRKISGLGTVDEIRERAFDALK.

10–15 contacts ATP; that stretch reads GAGKGT. The NMP stretch occupies residues 30-59; the sequence is STGDMLRAAVKAGTPLGVEAKGYMDAGKLV. AMP is bound by residues Thr-31, Arg-36, 57–59, 85–88, and Gln-92; these read KLV and GFPR. Residues 122 to 159 are LID; it reads GRRTHPASGRTYHVKFNPPKVEGHDDVTGEPLIQRDDD. ATP-binding positions include Arg-123 and 132 to 133; that span reads TY. AMP contacts are provided by Arg-156 and Arg-167. Gly-206 contacts ATP.

The protein belongs to the adenylate kinase family. As to quaternary structure, monomer.

Its subcellular location is the cytoplasm. The enzyme catalyses AMP + ATP = 2 ADP. The protein operates within purine metabolism; AMP biosynthesis via salvage pathway; AMP from ADP: step 1/1. Its function is as follows. Catalyzes the reversible transfer of the terminal phosphate group between ATP and AMP. Plays an important role in cellular energy homeostasis and in adenine nucleotide metabolism. The polypeptide is Adenylate kinase (Burkholderia cenocepacia (strain HI2424)).